A 220-amino-acid chain; its full sequence is Pyridoxine/pyridoxamine 5'-phosphate oxidase (220 aa).

Residues 49-54 (RMVLLK), 68-69 (YT), Lys-75, and Gln-97 each bind FMN. Lys-54 contacts substrate. Residues Tyr-115, Arg-119, and Ser-123 each coordinate substrate. Residues 132–133 (QS) and Trp-176 contribute to the FMN site. 182–184 (RLH) lines the substrate pocket. Residue Arg-186 coordinates FMN.

The protein belongs to the pyridoxamine 5'-phosphate oxidase family. Homodimer. FMN is required as a cofactor.

It catalyses the reaction pyridoxamine 5'-phosphate + O2 + H2O = pyridoxal 5'-phosphate + H2O2 + NH4(+). It carries out the reaction pyridoxine 5'-phosphate + O2 = pyridoxal 5'-phosphate + H2O2. Its pathway is cofactor metabolism; pyridoxal 5'-phosphate salvage; pyridoxal 5'-phosphate from pyridoxamine 5'-phosphate: step 1/1. The protein operates within cofactor metabolism; pyridoxal 5'-phosphate salvage; pyridoxal 5'-phosphate from pyridoxine 5'-phosphate: step 1/1. In terms of biological role, catalyzes the oxidation of either pyridoxine 5'-phosphate (PNP) or pyridoxamine 5'-phosphate (PMP) into pyridoxal 5'-phosphate (PLP). The protein is Pyridoxine/pyridoxamine 5'-phosphate oxidase of Paracoccus denitrificans (strain Pd 1222).